Reading from the N-terminus, the 318-residue chain is Pheromone-regulated membrane protein 5 (318 aa).

The tract at residues 15-56 (TTSTSSTTTASSSSTITSVXSSSSSLPLLSNSTSSSIIPSIT) is disordered. The helical transmembrane segment at 78–98 (FIVVGGIAGVIFLAILLWWVI) threads the bilayer. Serine 129 is subject to Phosphoserine. A compositionally biased stretch (low complexity) spans 238-247 (TISSSSASSL). Positions 238–318 (TISSSSASSL…HMLEGKEQDE (81 aa)) are disordered. Residues 250–261 (GNEKEVGEDIRK) show a composition bias toward basic and acidic residues. Polar residues predominate over residues 276 to 285 (SPESDGSVNR). Serine 279, serine 282, and serine 288 each carry phosphoserine. Basic and acidic residues predominate over residues 309 to 318 (HMLEGKEQDE). A Glycyl lysine isopeptide (Lys-Gly) (interchain with G-Cter in ubiquitin) cross-link involves residue lysine 314.

Belongs to the PRM5 family.

It is found in the membrane. The chain is Pheromone-regulated membrane protein 5 (PRM5) from Saccharomyces cerevisiae (strain Lalvin QA23) (Baker's yeast).